A 221-amino-acid chain; its full sequence is NADH-ubiquinone oxidoreductase chain 6 (221 aa).

5 consecutive transmembrane segments (helical) span residues 18–38 (FVEYILDIFSIMAFLTGIYVI), 44–64 (IVSVLFLILLFGGISSYLNII), 74–94 (IIVYIGAVSILFLFILMLINI), 107–127 (IPLTIFIGIIFSNFLFPMLPY), and 195–215 (IWLIIASFILLLAMVGSIVIT).

This sequence belongs to the complex I subunit 6 family.

Its subcellular location is the mitochondrion membrane. The catalysed reaction is a ubiquinone + NADH + 5 H(+)(in) = a ubiquinol + NAD(+) + 4 H(+)(out). Functionally, core subunit of the mitochondrial membrane respiratory chain NADH dehydrogenase (Complex I) that is believed to belong to the minimal assembly required for catalysis. Complex I functions in the transfer of electrons from NADH to the respiratory chain. The immediate electron acceptor for the enzyme is believed to be ubiquinone. The sequence is that of NADH-ubiquinone oxidoreductase chain 6 (ND6) from Podospora anserina (strain S / ATCC MYA-4624 / DSM 980 / FGSC 10383) (Pleurage anserina).